We begin with the raw amino-acid sequence, 335 residues long: Holliday junction branch migration complex subunit RuvB (335 aa).

Residues 1–181 (MERIIEIEKM…FGMNFWMQFY (181 aa)) are large ATPase domain (RuvB-L). ATP-binding positions include Leu-20, Arg-21, Gly-62, Lys-65, Thr-66, Thr-67, 128-130 (EDF), Arg-171, Tyr-181, and Arg-218. Position 66 (Thr-66) interacts with Mg(2+). The interval 182–252 (NIEELSQIIT…QARYALHELG (71 aa)) is small ATPAse domain (RuvB-S). The segment at 255–335 (DHGFDDLDLR…LPFEPNATLF (81 aa)) is head domain (RuvB-H). Arg-309 and Arg-314 together coordinate DNA.

The protein belongs to the RuvB family. Homohexamer. Forms an RuvA(8)-RuvB(12)-Holliday junction (HJ) complex. HJ DNA is sandwiched between 2 RuvA tetramers; dsDNA enters through RuvA and exits via RuvB. An RuvB hexamer assembles on each DNA strand where it exits the tetramer. Each RuvB hexamer is contacted by two RuvA subunits (via domain III) on 2 adjacent RuvB subunits; this complex drives branch migration. In the full resolvosome a probable DNA-RuvA(4)-RuvB(12)-RuvC(2) complex forms which resolves the HJ.

Its subcellular location is the cytoplasm. The catalysed reaction is ATP + H2O = ADP + phosphate + H(+). The RuvA-RuvB-RuvC complex processes Holliday junction (HJ) DNA during genetic recombination and DNA repair, while the RuvA-RuvB complex plays an important role in the rescue of blocked DNA replication forks via replication fork reversal (RFR). RuvA specifically binds to HJ cruciform DNA, conferring on it an open structure. The RuvB hexamer acts as an ATP-dependent pump, pulling dsDNA into and through the RuvAB complex. RuvB forms 2 homohexamers on either side of HJ DNA bound by 1 or 2 RuvA tetramers; 4 subunits per hexamer contact DNA at a time. Coordinated motions by a converter formed by DNA-disengaged RuvB subunits stimulates ATP hydrolysis and nucleotide exchange. Immobilization of the converter enables RuvB to convert the ATP-contained energy into a lever motion, pulling 2 nucleotides of DNA out of the RuvA tetramer per ATP hydrolyzed, thus driving DNA branch migration. The RuvB motors rotate together with the DNA substrate, which together with the progressing nucleotide cycle form the mechanistic basis for DNA recombination by continuous HJ branch migration. Branch migration allows RuvC to scan DNA until it finds its consensus sequence, where it cleaves and resolves cruciform DNA. The protein is Holliday junction branch migration complex subunit RuvB of Wolinella succinogenes (strain ATCC 29543 / DSM 1740 / CCUG 13145 / JCM 31913 / LMG 7466 / NCTC 11488 / FDC 602W) (Vibrio succinogenes).